The following is a 321-amino-acid chain: Citrate synthase (321 aa).

Active-site residues include His248 and Asp306.

The protein belongs to the citrate synthase family.

The enzyme catalyses oxaloacetate + acetyl-CoA + H2O = citrate + CoA + H(+). Its pathway is carbohydrate metabolism; tricarboxylic acid cycle; isocitrate from oxaloacetate: step 1/2. This Bartonella elizabethae (Rochalimaea elizabethae) protein is Citrate synthase (gltA).